A 232-amino-acid polypeptide reads, in one-letter code: uncharacterized protein (232 aa).

One can recognise an Autotransporter domain in the interval methionine 1–phenylalanine 232.

This is an uncharacterized protein from Escherichia coli (strain K12).